Here is a 962-residue protein sequence, read N- to C-terminus: Glycine dehydrogenase (decarboxylating) (962 aa).

Lys709 bears the N6-(pyridoxal phosphate)lysine mark.

It belongs to the GcvP family. In terms of assembly, the glycine cleavage system is composed of four proteins: P, T, L and H. It depends on pyridoxal 5'-phosphate as a cofactor.

It catalyses the reaction N(6)-[(R)-lipoyl]-L-lysyl-[glycine-cleavage complex H protein] + glycine + H(+) = N(6)-[(R)-S(8)-aminomethyldihydrolipoyl]-L-lysyl-[glycine-cleavage complex H protein] + CO2. In terms of biological role, the glycine cleavage system catalyzes the degradation of glycine. The P protein binds the alpha-amino group of glycine through its pyridoxal phosphate cofactor; CO(2) is released and the remaining methylamine moiety is then transferred to the lipoamide cofactor of the H protein. The polypeptide is Glycine dehydrogenase (decarboxylating) (Shewanella loihica (strain ATCC BAA-1088 / PV-4)).